Consider the following 1720-residue polypeptide: DNA-directed RNA polymerase I subunit RPA1 (1720 aa).

Residues cysteine 64, cysteine 67, cysteine 74, histidine 77, cysteine 104, and cysteine 107 each coordinate Zn(2+). Positions 110–201 are clamp; it reads LTCPRAVIHL…IALFWKAHMN (92 aa). Zn(2+) is bound by residues cysteine 205 and cysteine 208. Phosphoserine is present on serine 240. A clamp region spans residues 320–426; that stretch reads FTNGQTVNLQ…IRQILEKKEG (107 aa). Positions 403 to 416 are rudder; the sequence is DSEMDKLMMDKYPG. Residues lysine 424, arginine 429, and arginine 436 each coordinate DNA. The interval 468–542 is involved in RRN3 binding to Pol I complex; sequence YPQPVTPWNV…QGTKIVCRHV (75 aa). Arginine 552 contributes to the RNA binding site. Mg(2+)-binding residues include aspartate 588, aspartate 590, and aspartate 592. Position 592 (aspartate 592) interacts with RNA. Residues 805–883 form a funnel region; sequence KPKADVKRQR…NEINKACMPF (79 aa). The interval 960-1001 is bridging helix; it reads KPPEFFFHCMAGREGLVDTAVKTSRSGYLQRCIIKHLEGLVV. The tract at residues 1060-1155 is mediates the interaction with TOP2A; the sequence is ADPKKALHHF…SLSVWRPDIY (96 aa). The trigger loop stretch occupies residues 1207 to 1248; it reads PGEAVGLLAAQSIGEPSTQMTLNTFHFAGRGEMNVTLGIPRL. Arginine 1249 is a binding site for DNA. The tract at residues 1365-1498 is disordered; the sequence is RNVNTRRATQ…SQEPQGPEAM (134 aa). Positions 1373–1390 are enriched in basic and acidic residues; that stretch reads TQRDLDNAGELGRSRGEQ. Serine 1386 carries the post-translational modification Phosphoserine. Composition is skewed to acidic residues over residues 1391-1412 and 1422-1446; these read EGDE…DADA and EEEV…EDMQ. The segment covering 1447–1461 has biased composition (basic and acidic residues); sequence EERNPHREGARKTQE. Acidic residues predominate over residues 1462–1474; it reads QDEEVGLGTEEDP.

Belongs to the RNA polymerase beta' chain family. Component of the RNA polymerase I (Pol I) complex consisting of 13 subunits: a ten-subunit catalytic core composed of POLR1A/RPA1, POLR1B/RPA2, POLR1C/RPAC1, POLR1D/RPAC2, POLR1H/RPA12, POLR2E/RPABC1, POLR2F/RPABC2, POLR2H/RPABC3, POLR2K/RPABC4 and POLR2L/RPABC5; a mobile stalk subunit POLR1F/RPA43 protruding from the core and additional subunits homologous to general transcription factors POLR1E/RPA49 and POLR1G/RPA34. Part of Pol I pre-initiation complex (PIC), in which Pol I core assembles with RRN3 and promoter-bound UTBF and SL1/TIF-IB complex. Interacts (via dock II domain) with TOP2A; this interaction may assist Pol I transcription initiation by releasing supercoils occurring during DNA unwinding. Interacts with CAVIN1; this interaction induces the dissociation of Pol I complex paused at rDNA terminator sequences. Interacts with MYO1C. Interacts with ERBB2. Interacts with DDX11. Interacts with RECQL5. Requires Mg(2+) as cofactor.

Its subcellular location is the nucleus. The protein resides in the nucleolus. It is found in the chromosome. The catalysed reaction is RNA(n) + a ribonucleoside 5'-triphosphate = RNA(n+1) + diphosphate. Catalytic core component of RNA polymerase I (Pol I), a DNA-dependent RNA polymerase which synthesizes ribosomal RNA precursors using the four ribonucleoside triphosphates as substrates. Transcribes 47S pre-rRNAs from multicopy rRNA gene clusters, giving rise to 5.8S, 18S and 28S ribosomal RNAs. Pol I-mediated transcription cycle proceeds through transcription initiation, transcription elongation and transcription termination stages. During transcription initiation, Pol I pre-initiation complex (PIC) is recruited by the selectivity factor 1 (SL1/TIF-IB) complex bound to the core promoter that precedes an rDNA repeat unit. The PIC assembly bends the promoter favoring the formation of the transcription bubble and promoter escape. Once the polymerase has escaped from the promoter it enters the elongation phase during which RNA is actively polymerized, based on complementarity with the template DNA strand. Highly processive, assembles in structures referred to as 'Miller trees' where many elongating Pol I complexes queue and transcribe the same rDNA coding regions. At terminator sequences downstream of the rDNA gene, PTRF interacts with Pol I and halts Pol I transcription leading to the release of the RNA transcript and polymerase from the DNA. Forms Pol I active center together with the second largest subunit POLR1B/RPA2. Appends one nucleotide at a time to the 3' end of the nascent RNA, with POLR1A/RPA1 contributing a Mg(2+)-coordinating DxDGD motif, and POLR1B/RPA2 participating in the coordination of a second Mg(2+) ion and providing lysine residues believed to facilitate Watson-Crick base pairing between the incoming nucleotide and the template base. Typically, Mg(2+) ions direct a 5' nucleoside triphosphate to form a phosphodiester bond with the 3' hydroxyl of the preceding nucleotide of the nascent RNA, with the elimination of pyrophosphate. Has proofreading activity: Pauses and backtracks to allow the cleavage of a missincorporated nucleotide via POLR1H/RPA12. High Pol I processivity is associated with decreased transcription fidelity. The sequence is that of DNA-directed RNA polymerase I subunit RPA1 from Homo sapiens (Human).